We begin with the raw amino-acid sequence, 331 residues long: Biotin synthase (331 aa).

Residues 46–275 (YYGKKVKLNM…TKEIRISGGR (230 aa)) form the Radical SAM core domain. Positions 64, 68, and 71 each coordinate [4Fe-4S] cluster. The [2Fe-2S] cluster site is built by cysteine 108, cysteine 140, cysteine 200, and arginine 270.

This sequence belongs to the radical SAM superfamily. Biotin synthase family. Homodimer. The cofactor is [4Fe-4S] cluster. Requires [2Fe-2S] cluster as cofactor.

The catalysed reaction is (4R,5S)-dethiobiotin + (sulfur carrier)-SH + 2 reduced [2Fe-2S]-[ferredoxin] + 2 S-adenosyl-L-methionine = (sulfur carrier)-H + biotin + 2 5'-deoxyadenosine + 2 L-methionine + 2 oxidized [2Fe-2S]-[ferredoxin]. Its pathway is cofactor biosynthesis; biotin biosynthesis; biotin from 7,8-diaminononanoate: step 2/2. Functionally, catalyzes the conversion of dethiobiotin (DTB) to biotin by the insertion of a sulfur atom into dethiobiotin via a radical-based mechanism. The polypeptide is Biotin synthase (Lysinibacillus sphaericus (strain C3-41)).